The sequence spans 59 residues: Large ribosomal subunit protein bL32 (59 aa).

Residues 1–16 (MAVPKRKTSPSRRGMR) show a composition bias toward basic residues. Residues 1-59 (MAVPKRKTSPSRRGMRRSADALKAPTYVEDKNSGELRRPHHIDLKSGMYRGRQVLEPKE) form a disordered region. Residues 28–44 (VEDKNSGELRRPHHIDL) show a composition bias toward basic and acidic residues.

This sequence belongs to the bacterial ribosomal protein bL32 family.

In Brucella abortus (strain S19), this protein is Large ribosomal subunit protein bL32.